The chain runs to 397 residues: 3-hydroxybenzoate 6-hydroxylase (397 aa).

This sequence belongs to the 3-hydroxybenzoate 6-hydroxylase family. As to quaternary structure, monomer. It depends on FAD as a cofactor.

It catalyses the reaction 3-hydroxybenzoate + NADH + O2 + H(+) = 2,5-dihydroxybenzoate + NAD(+) + H2O. Its activity is regulated as follows. Inhibited by copper, mercury and iron ions. Functionally, catalyzes the NAD- or NADP-dependent conversion of 3-hydroxybenzoate to gentisate. NAD and NADP function equally well. The protein is 3-hydroxybenzoate 6-hydroxylase (mhbM) of Klebsiella oxytoca.